Here is a 169-residue protein sequence, read N- to C-terminus: Large ribosomal subunit protein bL9 (169 aa).

This sequence belongs to the bacterial ribosomal protein bL9 family.

Binds to the 23S rRNA. This is Large ribosomal subunit protein bL9 from Chlamydia pneumoniae (Chlamydophila pneumoniae).